Consider the following 192-residue polypeptide: Adenylate kinase (192 aa).

10 to 15 (GAGKGT) lines the ATP pocket. An NMP region spans residues 30-59 (STGDMLREVIAKETEVGKKAKAIISSGALV). AMP is bound by residues Thr31, Arg36, 57-59 (ALV), 85-88 (GYPR), and Gln92. The interval 126–142 (RRVQETVAAGGQVRLDD) is LID. Arg127 serves as a coordination point for ATP. Residues Arg139 and Arg150 each contribute to the AMP site. Ile178 contributes to the ATP binding site.

This sequence belongs to the adenylate kinase family. As to quaternary structure, monomer.

It localises to the cytoplasm. It carries out the reaction AMP + ATP = 2 ADP. The protein operates within purine metabolism; AMP biosynthesis via salvage pathway; AMP from ADP: step 1/1. Functionally, catalyzes the reversible transfer of the terminal phosphate group between ATP and AMP. Plays an important role in cellular energy homeostasis and in adenine nucleotide metabolism. This chain is Adenylate kinase, found in Bartonella tribocorum (strain CIP 105476 / IBS 506).